Here is a 123-residue protein sequence, read N- to C-terminus: Phospholipase A2 (123 aa).

Disulfide bonds link Cys11/Cys77, Cys27/Cys123, Cys29/Cys45, Cys44/Cys105, Cys51/Cys98, Cys61/Cys91, and Cys84/Cys96. Residues Tyr28, Gly30, and Gly32 each coordinate Ca(2+). Residue His48 is part of the active site. Asp49 contributes to the Ca(2+) binding site. Asp99 is a catalytic residue.

This sequence belongs to the phospholipase A2 family. Monomer or homodimer. The cofactor is Ca(2+). In terms of processing, activated by trypsin cleavage in the duodenum. Can also be activated by thrombin or autocatalytically.

The protein resides in the secreted. The catalysed reaction is a 1,2-diacyl-sn-glycero-3-phosphocholine + H2O = a 1-acyl-sn-glycero-3-phosphocholine + a fatty acid + H(+). It catalyses the reaction 1,2-ditetradecanoyl-sn-glycero-3-phosphocholine + H2O = 1-tetradecanoyl-sn-glycero-3-phosphocholine + tetradecanoate + H(+). The enzyme catalyses 1,2-dihexadecanoyl-sn-glycero-3-phosphocholine + H2O = 1-hexadecanoyl-sn-glycero-3-phosphocholine + hexadecanoate + H(+). It carries out the reaction 1-hexadecanoyl-2-(9Z-octadecenoyl)-sn-glycero-3-phosphocholine + H2O = 1-hexadecanoyl-sn-glycero-3-phosphocholine + (9Z)-octadecenoate + H(+). The catalysed reaction is 1-hexadecanoyl-2-(5Z,8Z,11Z,14Z-eicosatetraenoyl)-sn-glycero-3-phosphocholine + H2O = 1-hexadecanoyl-sn-glycero-3-phosphocholine + (5Z,8Z,11Z,14Z)-eicosatetraenoate + H(+). It catalyses the reaction 1-hexadecanoyl-2-(9Z-octadecenoyl)-sn-glycero-3-phospho-(1'-sn-glycerol) + H2O = 1-hexadecanoyl-sn-glycero-3-phospho-(1'-sn-glycerol) + (9Z)-octadecenoate + H(+). The enzyme catalyses N-hexadecanoyl-1,2-di-(9Z-octadecenoyl)-sn-glycero-3-phosphoethanolamine + H2O = N-hexadecanoyl-1-(9Z-octadecenoyl)-sn-glycero-3-phosphoethanolamine + (9Z)-octadecenoate + H(+). It carries out the reaction 1-hexadecanoyl-2-(9Z,12Z-octadecadienoyl)-sn-glycero-3-phosphoethanolamine + H2O = 1-hexadecanoyl-sn-glycero-3-phosphoethanolamine + (9Z,12Z)-octadecadienoate + H(+). The catalysed reaction is N,1-dihexadecanoyl-2-(9Z,12Z-octadecadienoyl)-sn-glycero-3-phosphoethanolamine + H2O = N,1-dihexadecanoyl-sn-glycero-3-phosphoethanolamine + (9Z,12Z)-octadecadienoate + H(+). Its function is as follows. Secretory calcium-dependent phospholipase A2 that primarily targets dietary phospholipids in the intestinal tract. Hydrolyzes the ester bond of the fatty acyl group attached at sn-2 position of phospholipids (phospholipase A2 activity) with preference for phosphatidylethanolamines and phosphatidylglycerols over phosphatidylcholines. May play a role in the biosynthesis of N-acyl ethanolamines that regulate energy metabolism and inflammation in the intestinal tract. Hydrolyzes N-acyl phosphatidylethanolamines to N-acyl lysophosphatidylethanolamines, which are further cleaved by a lysophospholipase D to release N-acyl ethanolamines. May act in an autocrine and paracrine manner. Has anti-helminth activity in a process regulated by gut microbiota. Upon helminth infection of intestinal epithelia, directly affects phosphatidylethanolamine contents in the membrane of helminth larvae, likely controlling an array of phospholipid-mediated cellular processes such as membrane fusion and cell division while providing for better immune recognition, ultimately reducing larvae integrity and infectivity. This is Phospholipase A2 (PLA2G1B) from Ovis aries (Sheep).